Here is a 321-residue protein sequence, read N- to C-terminus: Ribosomal RNA small subunit methyltransferase H (321 aa).

S-adenosyl-L-methionine-binding positions include 44-46, aspartate 64, phenylalanine 88, aspartate 109, and glutamine 116; that span reads GGH.

It belongs to the methyltransferase superfamily. RsmH family.

It localises to the cytoplasm. It catalyses the reaction cytidine(1402) in 16S rRNA + S-adenosyl-L-methionine = N(4)-methylcytidine(1402) in 16S rRNA + S-adenosyl-L-homocysteine + H(+). Its function is as follows. Specifically methylates the N4 position of cytidine in position 1402 (C1402) of 16S rRNA. This chain is Ribosomal RNA small subunit methyltransferase H, found in Methylobacillus flagellatus (strain ATCC 51484 / DSM 6875 / VKM B-1610 / KT).